The following is a 116-amino-acid chain: NADH-ubiquinone oxidoreductase chain 3 (116 aa).

The next 3 membrane-spanning stretches (helical) occupy residues 3-23 (LIMTILTITAALSLILATVSF), 56-76 (FFLVAILFLLFDLEIALLLPL), and 87-107 (GTFFWATTVLILLTLGLIYEW).

Belongs to the complex I subunit 3 family.

Its subcellular location is the mitochondrion membrane. The catalysed reaction is a ubiquinone + NADH + 5 H(+)(in) = a ubiquinol + NAD(+) + 4 H(+)(out). Core subunit of the mitochondrial membrane respiratory chain NADH dehydrogenase (Complex I) that is believed to belong to the minimal assembly required for catalysis. Complex I functions in the transfer of electrons from NADH to the respiratory chain. The immediate electron acceptor for the enzyme is believed to be ubiquinone. The protein is NADH-ubiquinone oxidoreductase chain 3 (MT-ND3) of Carassius auratus (Goldfish).